A 1389-amino-acid polypeptide reads, in one-letter code: DNA-directed RNA polymerase subunit beta'' (1389 aa).

The Zn(2+) site is built by Cys-220, Cys-290, Cys-297, and Cys-300.

The protein belongs to the RNA polymerase beta' chain family. RpoC2 subfamily. In terms of assembly, in plastids the minimal PEP RNA polymerase catalytic core is composed of four subunits: alpha, beta, beta', and beta''. When a (nuclear-encoded) sigma factor is associated with the core the holoenzyme is formed, which can initiate transcription. Zn(2+) serves as cofactor.

It localises to the plastid. It is found in the chloroplast. It catalyses the reaction RNA(n) + a ribonucleoside 5'-triphosphate = RNA(n+1) + diphosphate. In terms of biological role, DNA-dependent RNA polymerase catalyzes the transcription of DNA into RNA using the four ribonucleoside triphosphates as substrates. The sequence is that of DNA-directed RNA polymerase subunit beta'' from Chloranthus spicatus (Chulantree).